A 106-amino-acid chain; its full sequence is Ig kappa chain C region, B allele (106 aa).

The region spanning Pro-5 to Asn-102 is the Ig-like domain. Residues Cys-26 and Cys-86 are joined by a disulfide bond.

The chain is Ig kappa chain C region, B allele from Rattus norvegicus (Rat).